The sequence spans 334 residues: Stabilizer of axonemal microtubules 3 (334 aa).

3 disordered regions span residues 81 to 105, 128 to 153, and 233 to 260; these read AYVP…PTRT, YQSS…YFGP, and QVWS…RVPR. The segment covering 128-141 has biased composition (polar residues); it reads YQSSETRAQYTGSP. The span at 240-251 shows a compositional bias: pro residues; the sequence is QRPPCPRSSRPP.

The sequence is that of Stabilizer of axonemal microtubules 3 from Homo sapiens (Human).